A 218-amino-acid chain; its full sequence is Adenylate kinase (218 aa).

10 to 15 serves as a coordination point for ATP; that stretch reads GAGKGT. The tract at residues 30-59 is NMP; sequence STGDMLRAAVKAGTPLGQQAKAVMDAGQLV. AMP contacts are provided by residues Thr-31, Arg-36, 57-59, 85-88, and Gln-92; these read QLV and GFPR. Residues 122 to 159 are LID; it reads GRRSHPASGRTYHVKFNPPKVEGQDDVTGEPLVQREDD. ATP-binding positions include Arg-123 and 132 to 133; that span reads TY. Positions 127 to 151 are disordered; the sequence is PASGRTYHVKFNPPKVEGQDDVTGE. 2 residues coordinate AMP: Arg-156 and Arg-167. An ATP-binding site is contributed by Gly-203.

Belongs to the adenylate kinase family. In terms of assembly, monomer.

It localises to the cytoplasm. It catalyses the reaction AMP + ATP = 2 ADP. Its pathway is purine metabolism; AMP biosynthesis via salvage pathway; AMP from ADP: step 1/1. Catalyzes the reversible transfer of the terminal phosphate group between ATP and AMP. Plays an important role in cellular energy homeostasis and in adenine nucleotide metabolism. The protein is Adenylate kinase of Delftia acidovorans (strain DSM 14801 / SPH-1).